Consider the following 507-residue polypeptide: MAVVISSNGNSKSFDAKMTVYVFICVIIAAVGGLIFGYDIGISGGVTAMDDFLKEFFPSVYERKKHAHENNYCKYDNQFLQLFTSSLYLAALVASFFASATCSKLGRRPTMQLASIFFLIGVGLAAGAVNIYMLIIGRILLGFGVGFGNQAVPLFLSEIAPARLRGGLNIVFQLMVTIGILIANIVNYFTSSIHPYGWRIALGGAGIPALILLFGSLLICETPTSLIERNKTKEGKETLKKIRGVEDVDEEYESIVHACDIARQVKDPYTKLMKPASRPPFVIGMLLQFFQQFTGINAIMFYAPVLFQTVGFGNDAALLSAVVTGTINVLSTFVGIFLVDKTGRRFLLLQSSVHMLICQLVIGIILAKDLDVTGTLARPQALVVVIFVCVYVMGFAWSWGPLGWLIPSETFPLETRTEGFALAVSCNMFFTFVIAQAFLSMLCAMKSGIFFFFSGWIVVMGLFALFFVPETKGVSIDDMRDSVWKLHWYWKRFMLEEDEHDVEKRTD.

Topologically, residues 1–21 (MAVVISSNGNSKSFDAKMTVY) are cytoplasmic. Helical transmembrane passes span 22-42 (VFIC…DIGI), 79-99 (FLQL…FFAS), 116-136 (IFFL…MLII), 139-159 (ILLG…LSEI), 166-186 (GGLN…ANIV), 200-220 (IALG…LLIC), 281-301 (FVIG…AIMF), 319-339 (LSAV…IFLV), 346-366 (FLLL…GIIL), 382-402 (LVVV…WGPL), 419-439 (GFAL…QAFL), and 448-468 (GIFF…LFFV). At 469–507 (PETKGVSIDDMRDSVWKLHWYWKRFMLEEDEHDVEKRTD) the chain is on the cytoplasmic side.

The protein belongs to the major facilitator superfamily. Sugar transporter (TC 2.A.1.1) family.

The protein resides in the membrane. Mediates an active uptake of hexoses, probably by sugar/hydrogen symport. This Arabidopsis thaliana (Mouse-ear cress) protein is Sugar transport protein 8 (STP8).